We begin with the raw amino-acid sequence, 85 residues long: UPF0386 protein Arad_1912 (85 aa).

The protein belongs to the UPF0386 family.

The protein is UPF0386 protein Arad_1912 of Rhizobium rhizogenes (strain K84 / ATCC BAA-868) (Agrobacterium radiobacter).